The following is a 219-amino-acid chain: uncharacterized protein (219 aa).

The region spanning 57-158 (QLEHMTRAAM…LSEASRQTLL (102 aa)) is the HD domain.

This is an uncharacterized protein from Acanthamoeba polyphaga mimivirus (APMV).